We begin with the raw amino-acid sequence, 600 residues long: DNA ligase (600 aa).

Asp-258 contributes to the ATP binding site. The N6-AMP-lysine intermediate role is filled by Lys-260. ATP is bound by residues Arg-265, Arg-280, Glu-310, Phe-350, Arg-427, and Lys-433.

This sequence belongs to the ATP-dependent DNA ligase family. The cofactor is Mg(2+).

It catalyses the reaction ATP + (deoxyribonucleotide)n-3'-hydroxyl + 5'-phospho-(deoxyribonucleotide)m = (deoxyribonucleotide)n+m + AMP + diphosphate.. With respect to regulation, inhibited by PCNA123 and PCNA323. Functionally, DNA ligase that seals nicks in double-stranded DNA during DNA replication, DNA recombination and DNA repair. The sequence is that of DNA ligase from Sulfurisphaera tokodaii (strain DSM 16993 / JCM 10545 / NBRC 100140 / 7) (Sulfolobus tokodaii).